Consider the following 526-residue polypeptide: Glutamate--cysteine ligase (526 aa).

It belongs to the glutamate--cysteine ligase type 1 family. Type 1 subfamily.

The catalysed reaction is L-cysteine + L-glutamate + ATP = gamma-L-glutamyl-L-cysteine + ADP + phosphate + H(+). Its pathway is sulfur metabolism; glutathione biosynthesis; glutathione from L-cysteine and L-glutamate: step 1/2. This Proteus mirabilis (strain HI4320) protein is Glutamate--cysteine ligase.